Reading from the N-terminus, the 171-residue chain is Crossover junction endodeoxyribonuclease RuvC (171 aa).

Active-site residues include Asp-12, Glu-72, and Asp-144. The Mg(2+) site is built by Asp-12, Glu-72, and Asp-144.

This sequence belongs to the RuvC family. As to quaternary structure, homodimer which binds Holliday junction (HJ) DNA. The HJ becomes 2-fold symmetrical on binding to RuvC with unstacked arms; it has a different conformation from HJ DNA in complex with RuvA. In the full resolvosome a probable DNA-RuvA(4)-RuvB(12)-RuvC(2) complex forms which resolves the HJ. The cofactor is Mg(2+).

The protein resides in the cytoplasm. The catalysed reaction is Endonucleolytic cleavage at a junction such as a reciprocal single-stranded crossover between two homologous DNA duplexes (Holliday junction).. Functionally, the RuvA-RuvB-RuvC complex processes Holliday junction (HJ) DNA during genetic recombination and DNA repair. Endonuclease that resolves HJ intermediates. Cleaves cruciform DNA by making single-stranded nicks across the HJ at symmetrical positions within the homologous arms, yielding a 5'-phosphate and a 3'-hydroxyl group; requires a central core of homology in the junction. The consensus cleavage sequence is 5'-(A/T)TT(C/G)-3'. Cleavage occurs on the 3'-side of the TT dinucleotide at the point of strand exchange. HJ branch migration catalyzed by RuvA-RuvB allows RuvC to scan DNA until it finds its consensus sequence, where it cleaves and resolves the cruciform DNA. In Afipia carboxidovorans (strain ATCC 49405 / DSM 1227 / KCTC 32145 / OM5) (Oligotropha carboxidovorans), this protein is Crossover junction endodeoxyribonuclease RuvC.